The sequence spans 315 residues: Olfactory receptor 56A3 (315 aa).

At 1 to 29 (MTTHRNDTLSTEASDFLLNCFVRSPSWQH) the chain is on the extracellular side. N6 carries N-linked (GlcNAc...) asparagine glycosylation. Residues 30 to 50 (WLSLPLSLLFLLAVGANTTLL) traverse the membrane as a helical segment. The Cytoplasmic segment spans residues 51-58 (MTIWLEAS). The helical transmembrane segment at 59–79 (LHQPLYYLLSLLSLLDIVLCL) threads the bilayer. At 80 to 103 (TVIPKVLTIFWFDLRPISFPACFL) the chain is on the extracellular side. The cysteines at positions 101 and 193 are disulfide-linked. A helical transmembrane segment spans residues 104-124 (QMYIMNCFLAMESCTFMVMAY). Residues 125 to 143 (DRYVAICHPLRYPSIITDH) lie on the Cytoplasmic side of the membrane. Residues 144-164 (FVVKAAMFILTRNVLMTLPIP) form a helical membrane-spanning segment. The Extracellular segment spans residues 165-200 (ILSAQLRYCGRNVIENCICANMSVSRLSCDDVTINH). N-linked (GlcNAc...) asparagine glycosylation occurs at N185. A helical membrane pass occupies residues 201–221 (LYQFAGGWTLLGSDLILIFLS). At 222-241 (YTFILRAVLRLKAEGAVAKA) the chain is on the cytoplasmic side. The helical transmembrane segment at 242–262 (LSTCGSHFMLILFFSTILLVF) threads the bilayer. The Extracellular segment spans residues 263–277 (VLTHVAKKKVSPDVP). Residues 278-298 (VLLNVLHHVIPAALNPIIYGV) traverse the membrane as a helical segment. Residues 299-315 (RTQEIKQGMQRLLKKGC) are Cytoplasmic-facing.

It belongs to the G-protein coupled receptor 1 family.

Its subcellular location is the cell membrane. Functionally, odorant receptor. This is Olfactory receptor 56A3 (OR56A3) from Homo sapiens (Human).